A 176-amino-acid polypeptide reads, in one-letter code: Interleukin-20 (176 aa).

A signal peptide spans 1–24 (MKGFGLAFGLFSAVGFLLWTPLTG). Intrachain disulfides connect Cys33–Cys126, Cys80–Cys132, and Cys81–Cys134.

Belongs to the IL-10 family. As to quaternary structure, forms a 1:1:1 heterotrimeric complex with its primary high-affinity heterodimeric receptor IL20RA/IL20RB.

It is found in the secreted. Pro-inflammatory and angiogenic cytokine mainly secreted by monocytes and skin keratinocytes that plays crucial roles in immune responses, regulation of inflammatory responses, hemopoiesis, as well as epidermal cell and keratinocyte differentiation. Enhances tissue remodeling and wound-healing activities and restores the homeostasis of epithelial layers during infection and inflammatory responses to maintain tissue integrity. Affects multiple actin-mediated functions in activated neutrophils leading to inhibition of phagocytosis, granule exocytosis, and migration. Exert its effects via the type I IL-20 receptor complex consisting of IL20RA and IL20RB. Alternatively, can mediate its activity through a second receptor complex called type II IL-20 receptor complex composed of IL22RA1 and IL20RB. Acts as an arteriogenic and vascular remodeling factory by activating a range of signaling processes including phosphorylations of JAK2 and STAT5 as well as activation of the serine and threonine kinases AKT and ERK1/2. Alternatively, can activate STAT3 phosphorylation and transcriptional activity in a JAK2, ERK1/2 and p38 MAPK-dependent manner in keratinocytes. The chain is Interleukin-20 (Il20) from Mus musculus (Mouse).